Consider the following 300-residue polypeptide: Putative S-adenosyl-L-methionine-dependent methyltransferase Mkms_0379 (300 aa).

Residues Asp-128 and 157 to 158 (DL) contribute to the S-adenosyl-L-methionine site.

It belongs to the UPF0677 family.

In terms of biological role, exhibits S-adenosyl-L-methionine-dependent methyltransferase activity. The sequence is that of Putative S-adenosyl-L-methionine-dependent methyltransferase Mkms_0379 from Mycobacterium sp. (strain KMS).